Here is a 371-residue protein sequence, read N- to C-terminus: MAAAMSSSCCASSLRLIPFKRTLFSSIHYPAKTLLLRPLKPSEVPSFRRTIITFQKISTGIVPPPSASSSPSSYGDLQPIEELPPKLQEIVKLFQSVQEPKAKYEQLMFYGKNLTPLDSQFKTRENKVEGCVSQVWVRAFFDEERNVVYEADSDSVLTKGLAALLVKGLSGRPVPEILRITPDFAVLLGLQQSLSPSRNNGLLNMLKLMQKKALHLEVKGEEDSSSGESSESSFVSIPETKDEANVPEVDLESKPDLVEDLGTEKIDDSESGSNVVALGSRGMRIREKLEKELDPVELEVEDVSYQHAGHAAVRGSAGDDGETHFNLRIVSDAFQGKSLVKRHRLIYDLLQDELKSGLHALSIVAKTPAEV.

Residues 1–66 (MAAAMSSSCC…ISTGIVPPPS (66 aa)) constitute a chloroplast and mitochondrion transit peptide. Catalysis depends on cysteine 131, which acts as the Cysteine persulfide intermediate. Cysteine 131 carries the S-glutathionyl cysteine modification. Positions 218–249 (VKGEEDSSSGESSESSFVSIPETKDEANVPEV) are disordered.

This sequence belongs to the SufE family. In terms of assembly, heterotetramer with NFS2. Interacts with NFS2 and NIFS1. Interacts in vitro with GRXS14, GRXS15, GRXS16 and GRXS17, but not with GRXC5. Interacts in vivo only with GRXS14 and GRXS16. Glutathionylated. Glutathionylation strongly reduces the stimulation of NFS2 activity. As to expression, expressed in roots, leaves, stems and flowers.

Its subcellular location is the plastid. It localises to the chloroplast stroma. The protein resides in the mitochondrion. Its pathway is cofactor biosynthesis; iron-sulfur cluster biosynthesis. Its function is as follows. Participates in cysteine desulfurization mediated by NFS2 in chloroplast and NIFS1 in mitochondrion. Activates the cysteine desulfurase activity of NFS2. Cysteine desulfurization mobilizes sulfur from L-cysteine to yield L-alanine and supplies the inorganic sulfur for iron-sulfur (Fe-S) cluster formation. Glutaredoxins regulate SUFE1 activity by inducing its reduction and deglutathionylation. This is SufE-like protein 1, chloroplastic/mitochondrial from Arabidopsis thaliana (Mouse-ear cress).